The following is a 353-amino-acid chain: Dihydroorotate dehydrogenase (quinone) (353 aa).

FMN-binding positions include 66–70 and threonine 90; that span reads AGFDK. A substrate-binding site is contributed by lysine 70. 115–119 is a substrate binding site; that stretch reads NRMGF. The FMN site is built by asparagine 143 and asparagine 176. Asparagine 176 contacts substrate. Serine 179 (nucleophile) is an active-site residue. A substrate-binding site is contributed by asparagine 181. FMN is bound by residues lysine 212 and threonine 240. Substrate is bound at residue 241-242; sequence NT. Residues glycine 264, glycine 293, and 314–315 each bind FMN; that span reads YT.

Belongs to the dihydroorotate dehydrogenase family. Type 2 subfamily. Monomer. FMN serves as cofactor.

The protein localises to the cell membrane. It catalyses the reaction (S)-dihydroorotate + a quinone = orotate + a quinol. The protein operates within pyrimidine metabolism; UMP biosynthesis via de novo pathway; orotate from (S)-dihydroorotate (quinone route): step 1/1. Catalyzes the conversion of dihydroorotate to orotate with quinone as electron acceptor. The polypeptide is Dihydroorotate dehydrogenase (quinone) (Mycolicibacterium vanbaalenii (strain DSM 7251 / JCM 13017 / BCRC 16820 / KCTC 9966 / NRRL B-24157 / PYR-1) (Mycobacterium vanbaalenii)).